A 440-amino-acid chain; its full sequence is Protein disulfide-isomerase 2-3 (440 aa).

Residues 1 to 24 form the signal peptide; sequence MYKSPLTLLTLLTICFGFFDLSSA. Thioredoxin domains lie at 25 to 136 and 154 to 269; these read LYGS…KQIK and SKEK…ELVE. Residues C60 and C63 each act as nucleophile in the active site. C60 and C63 form a disulfide bridge. Residues 143-163 form a disordered region; the sequence is LEGKSKPTGGGSKEKKSEPSA. N168 carries N-linked (GlcNAc...) asparagine glycosylation. Catalysis depends on nucleophile residues C192 and C195. A disulfide bridge connects residues C192 and C195. The Prevents secretion from ER signature appears at 437–440; sequence KDEL.

Belongs to the protein disulfide isomerase family. Widely expressed.

It is found in the endoplasmic reticulum lumen. The enzyme catalyses Catalyzes the rearrangement of -S-S- bonds in proteins.. Functionally, acts as a protein-folding catalyst that interacts with nascent polypeptides to catalyze the formation, isomerization, and reduction or oxidation of disulfide bonds. The protein is Protein disulfide-isomerase 2-3 (PDIL2-3) of Arabidopsis thaliana (Mouse-ear cress).